A 117-amino-acid polypeptide reads, in one-letter code: Large ribosomal subunit protein bL20c (117 aa).

This sequence belongs to the bacterial ribosomal protein bL20 family.

It is found in the plastid. Its subcellular location is the chloroplast. Functionally, binds directly to 23S ribosomal RNA and is necessary for the in vitro assembly process of the 50S ribosomal subunit. It is not involved in the protein synthesizing functions of that subunit. This is Large ribosomal subunit protein bL20c from Nasturtium officinale (Watercress).